Consider the following 545-residue polypeptide: Cannabidiolic acid synthase-like 2 (545 aa).

Residues 1–28 (MKCSTFCFWYVCKIIFFFLSFNIQISIA) form the signal peptide. Cys37 and Cys99 are joined by a disulfide. N-linked (GlcNAc...) asparagine glycosylation is found at Asn45, Asn65, Asn89, and Asn168. The FAD-binding PCMH-type domain maps to 77–251 (TTPKPLVITT…AAWKIRLVAV (175 aa)). A cross-link (6-(S-cysteinyl)-8alpha-(pros-histidyl)-FAD (His-Cys)) is located at residues 114–176 (HDAEGMSYIS…ENLSFPAGYC (63 aa)). His292 provides a ligand contact to substrate. N-linked (GlcNAc...) asparagine glycans are attached at residues Asn297, Asn305, Asn329, and Asn361. Residue Tyr417 participates in substrate binding. Asn467 carries an N-linked (GlcNAc...) asparagine glycan. Tyr484 serves as the catalytic Proton acceptor. Asn499 is a glycosylation site (N-linked (GlcNAc...) asparagine).

This sequence belongs to the oxygen-dependent FAD-linked oxidoreductase family. Requires FAD as cofactor. The FAD cofactor is bound via a bicovalent 6-S-cysteinyl, 8alpha-N1-histidyl FAD linkage.

The protein resides in the secreted. Its function is as follows. Has no cannabidiolic acid synthase activity. The sequence is that of Cannabidiolic acid synthase-like 2 (CBDAS3) from Cannabis sativa (Hemp).